The primary structure comprises 192 residues: I-Kappa-B like protein H1 (192 aa).

ANK repeat units follow at residues 94–126 (KGAQCTHIIATSNVSCSIDMMNIVLQLGADING), 131–161 (AGLTPLHICVNKKNYALAEWLCQAPGIDVKV), and 165–192 (GKETPYDLACKMEDRKMMKIFEERSKKM).

This sequence belongs to the polydnaviridae I-Kappa-B-like protein family.

Functionally, suppresses the host immune response through NF-kappa-B inactivation. Possesses ankyrin repeat domains required for NF-kappa-B binding but lacks the regulatory regions required for dissociation from NF-kappa-B and degradation. Therefore, prevents host NF-kappa-B release and subsequent activation. The sequence is that of I-Kappa-B like protein H1 (H4) from Microplitis demolitor bracovirus (isolate Webb) (MdBV).